The primary structure comprises 497 residues: MASAMASSALREATCTMTRLAADVAASVSSIFSCKDSAGPRPVVPATKTTSTPLDVMFFTWFAKSSGSSLPPLKVVMTGATISIDSTRGALKKLARKGIKGWLNQYMATIKEIEPIVLYEQETDARWASYSILVRVVTSDGRVSYGEAVPTLRILPVVSAVRQTARAFLGRDPHEISAAFYEWYRQDFFLSRSFESATALSAIDMALWDLKARELGAPLYELLGGKLRDRVKVYANGWYGGCRDPQCFAEKAKEVVARGYDALKFDPFGPSFNSITSEELRRAEEAVAAVRDAVGDDVDILIEHHGRFNANAAVEIAKRFEPYRPYFMEEPLHHEDIEGYRKYRSLTSARIAMGERLISAKEALQYLVEGLVDVIQPDACNIGGVTGSMKVAALAEAFSVEVSYHNAYGPVQFALEVQLSAVTPTLYRLESFYDYWPQWKRDLIGDPFRLSQSSVEVPRGPGIGVAVNERVLEKYRAEPSEIPVGEEPVWVVRGTWR.

E303 provides a ligand contact to Mg(2+). The active-site Proton donor is H305. Residues E329 and E355 each coordinate Mg(2+). H405 acts as the Proton acceptor in catalysis.

It belongs to the mandelate racemase/muconate lactonizing enzyme family. GaD subfamily. Mg(2+) is required as a cofactor.

It carries out the reaction D-gluconate = 2-dehydro-3-deoxy-D-gluconate + H2O. It functions in the pathway carbohydrate acid metabolism; D-gluconate degradation. In terms of biological role, involved in the degradation of glucose via the Entner-Doudoroff pathway. Catalyzes the dehydration of gluconate to produce 2-keto-3-deoxygluconate (KDG). It is not able to use D-galactonate as substrate. In Thermoproteus tenax, this protein is D-gluconate dehydratase (gad).